A 176-amino-acid polypeptide reads, in one-letter code: Putative mediator of RNA polymerase II transcription subunit 31 (176 aa).

The interval 1–38 (MSSSSPINENDNGNIENNNETNITENGDNGESIDKKDD) is disordered. Residues 7-30 (INENDNGNIENNNETNITENGDNG) are compositionally biased toward low complexity.

The protein belongs to the Mediator complex subunit 31 family. As to quaternary structure, component of the Mediator complex.

It localises to the nucleus. Functionally, component of the Mediator complex, a coactivator involved in the regulated transcription of nearly all RNA polymerase II-dependent genes. Mediator functions as a bridge to convey information from gene-specific regulatory proteins to the basal RNA polymerase II transcription machinery. Mediator is recruited to promoters by direct interactions with regulatory proteins and serves as a scaffold for the assembly of a functional preinitiation complex with RNA polymerase II and the general transcription factors. This is Putative mediator of RNA polymerase II transcription subunit 31 (med31) from Dictyostelium discoideum (Social amoeba).